A 532-amino-acid chain; its full sequence is Zinc finger protein ZIC 2 (532 aa).

Residues 100 to 255 form a necessary for interaction with MDFIC and transcriptional activation or repression region; that stretch reads PHAAHVGSYS…YMRQQCIKQE (156 aa). Phosphoserine is present on residues S191 and S199. Residue K253 forms a Glycyl lysine isopeptide (Lys-Gly) (interchain with G-Cter in SUMO2) linkage. Residues 256-291 form a C2H2-type 1; atypical zinc finger; sequence LICKWIDPEQLSNPKKSCNKTFSTMHELVTHVSVEH. The segment at 300-327 adopts a C2H2-type 2; atypical zinc-finger fold; that stretch reads HVCFWEECPREGKPFKAKYKLVNHIRVH. 3 C2H2-type zinc fingers span residues 333-357, 363-387, and 393-415; these read FPCPFPGCGKVFARSENLKIHKRTH, FQCEFEGCDRRFANSSDRKKHMHVH, and YLCKMCDKSYTHPSSLRKHMKVH. Disordered stretches follow at residues 406–452 and 475–532; these read SSLR…SSSN and HRGG…EWYV. Over residues 417-435 the composition is skewed to low complexity; it reads SSPQGSESSPAASSGYESS. Over residues 476-521 the composition is skewed to gly residues; the sequence is RGGGSGSGGAGGGSGGGSGSGGGGGGAGGGGGGSSGGGSGTAGGHS. Positions 523–532 are enriched in polar residues; the sequence is LSSNFNEWYV.

It belongs to the GLI C2H2-type zinc-finger protein family. Interacts with RNF180. Interacts (via the C2H2-type domains 3, 4 and 5) with MDFIC (via the C2H2-type domains 3, 4 and 5); the interaction reduces its transcriptional activity. Interacts with GLI1 and GLI2. Interacts (via C2H2-type domain 3) with DHX9. Post-translationally, phosphorylated. In terms of processing, ubiquitinated by RNF180, leading to its degradation.

It localises to the nucleus. It is found in the cytoplasm. In terms of biological role, acts as a transcriptional activator or repressor. Plays important roles in the early stage of organogenesis of the CNS. Activates the transcription of the serotonin transporter SERT in uncrossed ipsilateral retinal ganglion cells (iRGCs) to refine eye-specific projections in primary visual targets. Its transcriptional activity is repressed by MDFIC. Involved in the formation of the ipsilateral retinal projection at the optic chiasm midline. Drives the expression of EPHB1 on ipsilaterally projecting growth cones. Binds to the minimal GLI-consensus sequence 5'-TGGGTGGTC-3'. Associates to the basal SERT promoter region from ventrotemporal retinal segments of retinal embryos. This chain is Zinc finger protein ZIC 2 (ZIC2), found in Homo sapiens (Human).